Consider the following 252-residue polypeptide: tRNA1(Val) (adenine(37)-N6)-methyltransferase (252 aa).

This sequence belongs to the methyltransferase superfamily. tRNA (adenine-N(6)-)-methyltransferase family.

The protein localises to the cytoplasm. The enzyme catalyses adenosine(37) in tRNA1(Val) + S-adenosyl-L-methionine = N(6)-methyladenosine(37) in tRNA1(Val) + S-adenosyl-L-homocysteine + H(+). In terms of biological role, specifically methylates the adenine in position 37 of tRNA(1)(Val) (anticodon cmo5UAC). In Proteus mirabilis (strain HI4320), this protein is tRNA1(Val) (adenine(37)-N6)-methyltransferase.